We begin with the raw amino-acid sequence, 2176 residues long: MHITKDIDTIFHRSLEGLTGDDHSPESRRDFPMSQSSGCRNGTDATVCHIFERIASQFPESVAAEDGGRNITYGELHYASNHLANHLSQIGIQSGQKIVIISNRSLEMIVALLGIMKSGACVVPIDFETWSQDRIQTTLETTQCRYAISTKCIEIPNQELILFQEGDLQHVLDNRRDQPASFSTRGFQLPSADDLAYTIFTSGTTSKPKGVMVPHSAIAHYVQQVSDEAPFNLNVQASSRVLLVFSVAFDACLGVVLSTICNGGTLILATSMNFATVATTCTILPLTPTILSTLRPGAEYDSIKSIFLGGESPSPNLLRPWLNGERRIFNCYGPTETTCTSLIKEVLPDEPNHLRYTVAGSSVVLLDGNLREVSEGEIAISGPGLAVGYFNNQALTAEKFIVYKGVRHYLTGDYGRKTSFGIDFLGRKDRVVKNRGFLINLEAEVEAVITNMKLANSAAALMHEGRLIMFVTPETIDVSSLRSRLLEIRDSFLVPDRIYAICSFPITSNGKVDLASLRQLLQEEKFTGVATHQSSPSSNLYVVLEGFSKVLGLPPSALCGSSSFLDNGGNSLSAVSLASHLRERGLSITVREIFESDTAQRICDTLSATILSTSDSEEADLESLRENVVRAGYPLTPRMEVAYMTAIQVNMIQSTIKMPSMNYIQLSITFDLSSGLFKPEVFRRAWEIIVQRHSILRATFIPALEATVIAADPTMDWREQLVDSSEWDSAVADAREKILCSMAPLDAEYLKPRSIFRLITEPKSRTEFIWTIHHSLVDGWSIAVIMRDLQCILSQEELPKVAQFTSVATVQKALAQRSLSRGKQQSWEEKMQNYIPAPRLRLPKPQGWARAARAERRQLLGVHRSQVQRFVQEYRVSDASIFLASWALVLSKYLSTDRVLFGVVLSGRNLPMAAVDQVVGPLLDTVPFPVNTTSTQSTAEFLRTIHGTLHEMNESPWEMKLQKSSMGPESLETLVALQYDLPDSTWNVDPKTWPSPQSMKHNETTELPLHILIDMQNGGDLEARYLYDCSHFEAAMIDQMLSHFSNMLKAILMHPTVELVKSSMMNQLEINDLLYSSPHMHDAYDGPQSLKQAFEEVVDTWPDAIAVESVSDSISYKELDHRSSAISNALLPLVGPGQIVGILSDGSVSWITAILAVLKAGAAYCPIDIALPEERIKVMLRESRCSLLLCTTEDLCELWANHSDLTCFSIGRLLSETLQTPERLPERCSPHDPAAVIFTSGSTGVPKGILLEHIGILSLLDFPNARLRSGPGRRNAQFLSLGFDCCVNEVFATLCYGATLVLRDPLDPVQHIKRVHATMCTPSFLATLDVNDFPNLELIALAGEPVPQKLVDTWGHNRVLLNVYSPSECTISTVYPQLYPGVQVTLGSPVPRQAIYILDKDLNPVPVGVPGEICISGIQVTRGYLNRPEETLVKFLPNPFQKGWRLYRSGDLGRLTNSHEIEYIGRIDNQVKVRGFRIELEEIESTIAALNPEVRQAAVIVVNDVLIGFVTPSSLDTLAIQAIISRHLPSYCRPSYFVALDNMPMSSNQKIDRKKLVSMKAERNHFTKVPIEGTTERIIQEIWKDLIPELGEVSALDNFLQIGGHSLLQARLTRQLGMALGNRIPLRIVIQNPVLRDLALAIDKHILDGGSEDISRGQPEQNTVLSHLEEEMYTVHMLSSEPSAWNIPYIARLTGPLNLAAFEASWNNIIRSNSILRARYQIKDGILTRSISTSISPVTRRYCKVTDDALLDIVNRAFDLANDQPIRLDLCLDRPTMSYVVLNMSHMIGDRSTMGEILRLLEEEYAQMILNDNFNLHEPLSESLPYSVWTAMRRKREVDAGLTHVLQKSLNPSLINPPLFGTFKQELACSAHRDKRIEGDLFSSLKNLRGRFKASGHQLAIAAIGLTLHRLSHREDFIIAAPIEDRTEAGTENMFGLFLDRLLIPLRFNLHSPHSADDLIHMVKSASEQAMANYIPFADLKNVLGMVGKSHSLCEIMVTYHASDLQGPNLTGVDALGIPVQPKGVKFPLMLEFSEFPESIGIDLAYDSHAIDNATMDEFEVQLMAAFRYLADETCSSTCTTYPPRLFPLIWSQKDTNTVAPISEDQEMIDLVREAMAECVGLNRCDISCSRSFFELGGSSVDCLRLQDRLIKSGVSVSLSSIIHLQTAELIAGAVE.

Residues Glu16–Phe31 show a composition bias toward basic and acidic residues. Residues Glu16–Gly38 form a disordered region. Residues Phe51–Asn434 form an adenylation 1 region. A Carrier 1 domain is found at Ser534–Ile610. An O-(pantetheine 4'-phosphoryl)serine modification is found at Ser571. A condensation 1 region spans residues Tyr643–Leu1073. The interval Phe1094 to Arg1474 is adenylation 2. One can recognise a Carrier 2 domain in the interval Pro1570 to Ile1646. Ser1606 is subject to O-(pantetheine 4'-phosphoryl)serine. Positions Gln1661–Leu2070 are condensation 2. Residues Gln2106–Glu2176 enclose the Carrier 3 domain. Ser2140 is modified (O-(pantetheine 4'-phosphoryl)serine).

The protein belongs to the NRP synthetase family.

It participates in mycotoxin biosynthesis. Nonribosomal peptide synthetase; part of the gene cluster that mediates the biosynthesis of sirodesmin PL, an epipolythiodioxopiperazine (ETP) characterized by a disulfide bridged cyclic dipeptide and that acts as a phytotoxin which is involved in the blackleg didease of canola. SirD catalyzes the O-prenylation of L-tyrosine (L-Tyr) in the presence of dimethylallyl diphosphate (DMAPP) to yield 4-O-dimethylallyl-L-Tyr, and therefore represents probably the first pathway-specific enzyme in the biosynthesis of sirodesmin PL. 4-O-dimethylallyl-L-Tyr, then undergoes condensation with L-Ser in a reaction catalyzed by the non-ribosomal peptide synthase sirP to form the diketopiperazine (DKP) backbone. Further bishydroxylation of the DKP performed by the cytochrome P450 monooxygenase sirC leads to the production of the intermediate phomamide. This step is essential to form the reactive thiol group required for toxicity of sirodesmin PL. The next steps of sirodesmin biosynthesis are not well understood yet, but some predictions could be made from intermediate compounds identification. Phomamide is converted into phomalizarine via oxidation, probably by sirT. Further oxidation, methylation (by sirM or sirN) and reduction steps convert phomalizarine to deacetyl sirodesmin. Finally, acetyltransferase sirH probably acetylates deacetyl sirodesmin to produce sirodesmin PL. The sequence is that of Nonribosomal peptide synthetase sirP from Leptosphaeria maculans (Blackleg fungus).